The primary structure comprises 517 residues: Keratin-associated protein 16-1 (517 aa).

Repeat copies occupy residues 73-77 (CCDPV), 93-97 (CCEAT), 128-132 (CCQPV), 153-157 (CCEPA), 168-172 (CCQPV), 198-202 (CCQPV), 208-212 (CCSAV), 228-232 (CCQPV), 248-252 (CCDPS), 283-287 (CCVQS), and 303-307 (CCVSS). Positions 73-307 (CCDPVICEPS…CQEPSCCVSS (235 aa)) are 11 X 5 AA repeats of C-C-X(3). Residues 483–517 (VSEEAPCQPTEAKPISPTTREAAAAQPAASKPANC) form a disordered region. Over residues 504–517 (AAAAQPAASKPANC) the composition is skewed to low complexity.

This sequence belongs to the KRTAP type 16 family.

This Homo sapiens (Human) protein is Keratin-associated protein 16-1 (KRTAP16-1).